We begin with the raw amino-acid sequence, 23 residues long: FHPSLWVLIPQYIQLIRKILKSG.

Serine amide is present on S22.

As to expression, expressed by the venom duct.

It localises to the secreted. In terms of biological role, this cytolytic peptide has ability to disrupt the integrity of cell membranes from both prokaryotes and eukaryotes. It permeabilizes both negatively charged prokaryotic (PE:PG) and zwitterionic eukaryotic (PC:cholesterol) model membranes. It has potent hemolytic activity on human erythrocytes and exhibits low antimicrobial activity against the Gram-negative bacterium E.coli (MIC&gt;50 uM) and the Gram-positive bacterium S.aureus (MIC=25-50 uM). Intracranial injection causes mice to shuffle backward until the encounter an obstacle, at which time the mouse jump into the air. The backward shuffle is reminiscent to the signature dance 'moonwalk' that gained widespread popularity after being performed by Michael Jackson. This is Conolysin-Mt1 from Conus mustelinus (Weasel cone).